The following is a 414-amino-acid chain: MIIMLSEYLEEFKEYLERFKNIDINFSDVLKMSKKFIIWRLKQIFGDSSTIFTNISSEITIFDKIFQMIDYDIDGEVEKRLPKDESRFMIGVRREKEIEIKKEIITNLLDFLLIILLSHTPYFNAFVRKYAEIKKIKVIKKLPNKISVWEFIKIASRSRINDLHLERLDLENGFVDITKIKEIFAKEIIRVELMKLGENIKKRKLPDDSVVKELLNEISDYLKDKVKYEQISGIKALNYKGNIPLEWHPPCIRGILNDILSGGSPSHYARRSFVVYWFCAKFNPNLRPLDKNGNLVNVSATDIASEEEIERFIDELIEMLFKNVEDFDEKKTRYYIMHNIGYKVGHGRLTHCEYCKNWQDDGGKGLSYYCKPDELCKKKFIIHPLDYLCYNINKHLKKERFKKIKKEDKNGDNK.

Residues Cys251, Cys352, Cys370, and Cys376 each contribute to the [4Fe-4S] cluster site.

The protein belongs to the eukaryotic-type primase large subunit family. Heterodimer of a small subunit (PriS) and a large subunit (PriL). It depends on [4Fe-4S] cluster as a cofactor.

Its function is as follows. Regulatory subunit of DNA primase, an RNA polymerase that catalyzes the synthesis of short RNA molecules used as primers for DNA polymerase during DNA replication. Stabilizes and modulates the activity of the small subunit, increasing the rate of DNA synthesis, and conferring RNA synthesis capability. The DNA polymerase activity may enable DNA primase to also catalyze primer extension after primer synthesis. May also play a role in DNA repair. This Methanocaldococcus jannaschii (strain ATCC 43067 / DSM 2661 / JAL-1 / JCM 10045 / NBRC 100440) (Methanococcus jannaschii) protein is DNA primase large subunit PriL.